A 380-amino-acid chain; its full sequence is Erythronate-4-phosphate dehydrogenase (380 aa).

The substrate site is built by S45 and T66. NAD(+) is bound by residues 126-127 (QV), D146, T174, 205-207 (ASR), and D231. The active site involves R207. Residue E236 is part of the active site. Catalysis depends on H253, which acts as the Proton donor. Position 256 (G256) interacts with NAD(+). Y257 lines the substrate pocket.

Belongs to the D-isomer specific 2-hydroxyacid dehydrogenase family. PdxB subfamily. As to quaternary structure, homodimer.

It is found in the cytoplasm. The catalysed reaction is 4-phospho-D-erythronate + NAD(+) = (R)-3-hydroxy-2-oxo-4-phosphooxybutanoate + NADH + H(+). It participates in cofactor biosynthesis; pyridoxine 5'-phosphate biosynthesis; pyridoxine 5'-phosphate from D-erythrose 4-phosphate: step 2/5. In terms of biological role, catalyzes the oxidation of erythronate-4-phosphate to 3-hydroxy-2-oxo-4-phosphonooxybutanoate. The sequence is that of Erythronate-4-phosphate dehydrogenase from Pseudomonas syringae pv. syringae (strain B728a).